A 562-amino-acid chain; its full sequence is Dihydroxy-acid dehydratase 2 (562 aa).

Cysteine 50 contacts [2Fe-2S] cluster. Aspartate 82 contacts Mg(2+). Cysteine 123 is a [2Fe-2S] cluster binding site. Mg(2+) is bound by residues aspartate 124, lysine 125, and glutamate 447. Position 125 is an N6-carboxylysine (lysine 125). The Proton acceptor role is filled by serine 473.

Belongs to the IlvD/Edd family. In terms of assembly, homodimer. Requires [2Fe-2S] cluster as cofactor. The cofactor is Mg(2+).

It carries out the reaction (2R)-2,3-dihydroxy-3-methylbutanoate = 3-methyl-2-oxobutanoate + H2O. The enzyme catalyses (2R,3R)-2,3-dihydroxy-3-methylpentanoate = (S)-3-methyl-2-oxopentanoate + H2O. The protein operates within amino-acid biosynthesis; L-isoleucine biosynthesis; L-isoleucine from 2-oxobutanoate: step 3/4. It participates in amino-acid biosynthesis; L-valine biosynthesis; L-valine from pyruvate: step 3/4. Its function is as follows. Functions in the biosynthesis of branched-chain amino acids. Catalyzes the dehydration of (2R,3R)-2,3-dihydroxy-3-methylpentanoate (2,3-dihydroxy-3-methylvalerate) into 2-oxo-3-methylpentanoate (2-oxo-3-methylvalerate) and of (2R)-2,3-dihydroxy-3-methylbutanoate (2,3-dihydroxyisovalerate) into 2-oxo-3-methylbutanoate (2-oxoisovalerate), the penultimate precursor to L-isoleucine and L-valine, respectively. This chain is Dihydroxy-acid dehydratase 2, found in Bordetella pertussis (strain Tohama I / ATCC BAA-589 / NCTC 13251).